The chain runs to 368 residues: Ferredoxin--NADP reductase (368 aa).

Residues Asp56, Gln64, Tyr69, Val109, Phe144, Asp310, and Thr351 each contribute to the FAD site.

It belongs to the ferredoxin--NADP reductase type 2 family. Homodimer. FAD is required as a cofactor.

It carries out the reaction 2 reduced [2Fe-2S]-[ferredoxin] + NADP(+) + H(+) = 2 oxidized [2Fe-2S]-[ferredoxin] + NADPH. The chain is Ferredoxin--NADP reductase from Leptothrix cholodnii (strain ATCC 51168 / LMG 8142 / SP-6) (Leptothrix discophora (strain SP-6)).